Reading from the N-terminus, the 130-residue chain is Small ribosomal subunit protein uS8 (130 aa).

It belongs to the universal ribosomal protein uS8 family. In terms of assembly, part of the 30S ribosomal subunit. Contacts proteins S5 and S12.

In terms of biological role, one of the primary rRNA binding proteins, it binds directly to 16S rRNA central domain where it helps coordinate assembly of the platform of the 30S subunit. In Cytophaga hutchinsonii (strain ATCC 33406 / DSM 1761 / CIP 103989 / NBRC 15051 / NCIMB 9469 / D465), this protein is Small ribosomal subunit protein uS8.